We begin with the raw amino-acid sequence, 316 residues long: Glutathione synthetase (316 aa).

Positions 125–310 (KLFTAWFSDL…ITGMLMDAIE (186 aa)) constitute an ATP-grasp domain. 151–207 (WEKHSDIILKPLDGMGGASIFRVKEGDPNLGVIAETLTEHGTRYCMAQNYLPAIKDG) serves as a coordination point for ATP. Residues glutamate 281 and asparagine 283 each contribute to the Mg(2+) site.

The protein belongs to the prokaryotic GSH synthase family. Mg(2+) is required as a cofactor. Mn(2+) serves as cofactor.

It carries out the reaction gamma-L-glutamyl-L-cysteine + glycine + ATP = glutathione + ADP + phosphate + H(+). The protein operates within sulfur metabolism; glutathione biosynthesis; glutathione from L-cysteine and L-glutamate: step 2/2. The polypeptide is Glutathione synthetase (Escherichia coli O6:H1 (strain CFT073 / ATCC 700928 / UPEC)).